The chain runs to 450 residues: MGETMSKRLKLHLGGEAEMEERAFVNPFPDYEAAAGALLASGAAEETGCVRPPATTDEPGLPFHQDGKIIHNFIRRIQTKIKDLLQQMEEGLKTADPHDCSAYTGWTGIALLYLQLYRVTCDQTYLLRSLDYVKRTLRNLNGRRVTFLCGDAGPLAVGAVIYHKLRSDCESQECVTKLLQLQRSVVCQESDLPDELLYGRAGYLYALLYLNTEIGPGTVCESAIKEVVNAIIESGKTLSREERKTERCPLLYQWHRKQYVGAAHGMAGIYYMLMQPAAKVDQETLTEMVKPSIDYVRHKKFRSGNYPSSLSNETDRLVHWCHGAPGVIHMLMQAYKVFKEEKYLKEAMECSDVIWQRGLLRKGYGICHGTAGNGYSFLSLYRLTQDKKYLYRACKFAEWCLDYGAHGCRIPDRPYSLFEGMAGAIHFLSDVLGPETSRFPAFELDSSKRD.

The N-myristoyl glycine moiety is linked to residue Gly-2. An interaction with inositol phospholipids region spans residues 2-15; that stretch reads GETMSKRLKLHLGG. Tyr-198 carries the phosphotyrosine modification.

Belongs to the LanC-like protein family. Interacts with an array of inositol phospholipids such as phosphatidylinositol 3-phosphate (PI3P), phosphatidylinositol 4-phosphate (PI4P) and phosphatidylinositol 5-phosphate (PI5P). PIP-binding enhances membrane association. In terms of processing, myristoylated. Essential for membrane association. As to expression, expressed in brain and testis.

It is found in the nucleus. The protein resides in the cytoplasm. It localises to the cell membrane. In terms of biological role, necessary for abscisic acid (ABA) binding on the cell membrane and activation of the ABA signaling pathway in granulocytes. The polypeptide is LanC-like protein 2 (LANCL2) (Homo sapiens (Human)).